The sequence spans 414 residues: Imidazolonepropionase (414 aa).

A compositionally biased stretch (polar residues) spans 1 to 20 (MSHQLFRNTRIYSPMDSGQP). The tract at residues 1–26 (MSHQLFRNTRIYSPMDSGQPSAGKAQ) is disordered. The Fe(3+) site is built by H81 and H83. Positions 81 and 83 each coordinate Zn(2+). Residues R90, Y153, and H186 each coordinate 4-imidazolone-5-propanoate. Residue Y153 participates in N-formimidoyl-L-glutamate binding. H251 provides a ligand contact to Fe(3+). H251 serves as a coordination point for Zn(2+). 4-imidazolone-5-propanoate is bound at residue E254. D325 lines the Fe(3+) pocket. Residue D325 coordinates Zn(2+). N-formimidoyl-L-glutamate contacts are provided by N327 and G329. A 4-imidazolone-5-propanoate-binding site is contributed by S330.

This sequence belongs to the metallo-dependent hydrolases superfamily. HutI family. It depends on Zn(2+) as a cofactor. The cofactor is Fe(3+).

It is found in the cytoplasm. It carries out the reaction 4-imidazolone-5-propanoate + H2O = N-formimidoyl-L-glutamate. Its pathway is amino-acid degradation; L-histidine degradation into L-glutamate; N-formimidoyl-L-glutamate from L-histidine: step 3/3. Its function is as follows. Catalyzes the hydrolytic cleavage of the carbon-nitrogen bond in imidazolone-5-propanoate to yield N-formimidoyl-L-glutamate. It is the third step in the universal histidine degradation pathway. The polypeptide is Imidazolonepropionase (Desulfotalea psychrophila (strain LSv54 / DSM 12343)).